Reading from the N-terminus, the 186-residue chain is Photosystem I assembly protein Ycf4 (186 aa).

The next 2 helical transmembrane spans lie at 22–42 and 57–77; these read FCWA…GTSS and IIFF…LFIS.

Belongs to the Ycf4 family.

It localises to the plastid. The protein localises to the chloroplast thylakoid membrane. Functionally, seems to be required for the assembly of the photosystem I complex. The chain is Photosystem I assembly protein Ycf4 from Dioscorea elephantipes (Elephant's foot yam).